A 109-amino-acid chain; its full sequence is Thiosulfate sulfurtransferase GlpE (109 aa).

Residues 17–105 (KEGKTALVDI…WARSYPQDIT (89 aa)) enclose the Rhodanese domain. The active-site Cysteine persulfide intermediate is Cys65.

It belongs to the GlpE family.

It is found in the cytoplasm. The catalysed reaction is thiosulfate + hydrogen cyanide = thiocyanate + sulfite + 2 H(+). The enzyme catalyses thiosulfate + [thioredoxin]-dithiol = [thioredoxin]-disulfide + hydrogen sulfide + sulfite + 2 H(+). Its function is as follows. Transferase that catalyzes the transfer of sulfur from thiosulfate to thiophilic acceptors such as cyanide or dithiols. May function in a CysM-independent thiosulfate assimilation pathway by catalyzing the conversion of thiosulfate to sulfite, which can then be used for L-cysteine biosynthesis. The sequence is that of Thiosulfate sulfurtransferase GlpE from Yersinia pestis.